Here is a 174-residue protein sequence, read N- to C-terminus: Large ribosomal subunit protein uL10 (174 aa).

Belongs to the universal ribosomal protein uL10 family. As to quaternary structure, part of the ribosomal stalk of the 50S ribosomal subunit. The N-terminus interacts with L11 and the large rRNA to form the base of the stalk. The C-terminus forms an elongated spine to which L12 dimers bind in a sequential fashion forming a multimeric L10(L12)X complex.

Its function is as follows. Forms part of the ribosomal stalk, playing a central role in the interaction of the ribosome with GTP-bound translation factors. The protein is Large ribosomal subunit protein uL10 of Anaeromyxobacter sp. (strain Fw109-5).